A 728-amino-acid chain; its full sequence is MEGEGVRNFKELRAKFQNLDAPPLPGPIKFPAGVSPKGDIGGTQSTQILANGKPLSSNHKQRTPYCSSSESQPLQPQKIKLAQKSEIPKCSNSPGPLGKSTVCSATSSQKASLLLEVTQSNVEIITKEKVMVANSFRNKLWNWEKVSSQKSEMSSALLLANYGSKAIHLEGQKGMGLTPEEPRKKLETKGAQTLPSQKHVVAPKILHNVSEDPSFVISQHIRKSWENPPPERSPASSPCQPIYECELASQAPEKQPDVRHHHLPKTKPLPSIDSLGPPPPKPSRPPIVNLQAFQRQPAAVPKTQGEVTVEEGSLSPERLFNAEFEEPHNYEATISYLRHSGNSINLCTAKEIADPTYEVGIEELQKPGKNFPYPEPSAKHEDKKMKEKQPCELKPKNTEKEPYSNHVFKVDACEGTPEKIQMTNVHTGRRNMLAGKQEAMIDIIQTNPCPEGPKLARHSQGHCGHLEVLESTKETPDLGVSKTSSISEEIYDDVEYSRKEVPKLNYSSSLASSSEENRELYEDVYKTKNNYPKIDLDGKEALKRLQQFFKKEKDRFKIKKTKSKENLSAFSILLPDLELKSQEVIIYDDVDLSEKESKDEDKLKMWKPKFLTPKEKKEKNGAEESESFSPRNFFKTKKQNLEKNRMKREEKLFRERFKYDKEIIVINTAVACSNNSRNGIFDLPISPGEELEVIDTTEQNLVICRNSKGKYGYVLIEHLDFKHQSWSP.

Disordered regions lie at residues 17–76 (QNLD…PLQP), 250–287 (QAPE…RPPI), and 367–390 (PGKN…EKQP). Over residues 42–75 (GTQSTQILANGKPLSSNHKQRTPYCSSSESQPLQ) the composition is skewed to polar residues. The span at 276-285 (GPPPPKPSRP) shows a compositional bias: pro residues. A compositionally biased stretch (basic and acidic residues) spans 377 to 390 (SAKHEDKKMKEKQP). At Tyr491 the chain carries Phosphotyrosine. The SH2-binding; to LCP2 signature appears at 521 to 524 (YEDV). At Tyr587 the chain carries Phosphotyrosine. Residues 664–724 (IVINTAVACS…LIEHLDFKHQ (61 aa)) enclose the SH3 domain.

As to quaternary structure, interacts with SKAP1, LCK and FYN. The phosphorylated form interacts with LCP2. Post-translationally, phosphorylation is required for its function in T-cell activation. In terms of tissue distribution, expressed in T-cells (at protein level). Widely expressed.

The protein localises to the membrane raft. In terms of biological role, adapter protein that plays a role in T-cell receptor (TCR)-mediated activation of signaling pathways. Required for T-cell activation and integrin-mediated T-cell adhesion in response to TCR stimulation. The chain is FYN-binding protein 2 from Homo sapiens (Human).